We begin with the raw amino-acid sequence, 178 residues long: uncharacterized protein (178 aa).

An N-terminal signal peptide occupies residues 1-19; the sequence is MKKNIHILGASGVGTSTLG.

This is an uncharacterized protein from Bacillus subtilis (strain 168).